Here is a 226-residue protein sequence, read N- to C-terminus: Urease accessory protein UreF (226 aa).

Belongs to the UreF family. In terms of assembly, ureD, UreF and UreG form a complex that acts as a GTP-hydrolysis-dependent molecular chaperone, activating the urease apoprotein by helping to assemble the nickel containing metallocenter of UreC. The UreE protein probably delivers the nickel.

The protein localises to the cytoplasm. Its function is as follows. Required for maturation of urease via the functional incorporation of the urease nickel metallocenter. In Burkholderia mallei (strain NCTC 10247), this protein is Urease accessory protein UreF.